The primary structure comprises 185 residues: ATP synthase subunit b, chloroplastic (185 aa).

A helical transmembrane segment spans residues 7–29 (SFVYLVGHCPFAGSFAFNTDILA).

The protein belongs to the ATPase B chain family. As to quaternary structure, F-type ATPases have 2 components, F(1) - the catalytic core - and F(0) - the membrane proton channel. F(1) has five subunits: alpha(3), beta(3), gamma(1), delta(1), epsilon(1). F(0) has four main subunits: a(1), b(1), b'(1) and c(10-14). The alpha and beta chains form an alternating ring which encloses part of the gamma chain. F(1) is attached to F(0) by a central stalk formed by the gamma and epsilon chains, while a peripheral stalk is formed by the delta, b and b' chains.

It localises to the plastid. The protein localises to the chloroplast thylakoid membrane. Functionally, f(1)F(0) ATP synthase produces ATP from ADP in the presence of a proton or sodium gradient. F-type ATPases consist of two structural domains, F(1) containing the extramembraneous catalytic core and F(0) containing the membrane proton channel, linked together by a central stalk and a peripheral stalk. During catalysis, ATP synthesis in the catalytic domain of F(1) is coupled via a rotary mechanism of the central stalk subunits to proton translocation. In terms of biological role, component of the F(0) channel, it forms part of the peripheral stalk, linking F(1) to F(0). This Dioscorea elephantipes (Elephant's foot yam) protein is ATP synthase subunit b, chloroplastic.